Reading from the N-terminus, the 354-residue chain is G-protein coupled estrogen receptor 1 (354 aa).

Residues 1-40 (MEEQTTSLVWIYVNSTEQLNTSYEYNTTYLIEDSDKYQSY) are Extracellular-facing. A helical membrane pass occupies residues 41-61 (VIGLFLSCLYTILLFPIGFIG). Topologically, residues 62-81 (NILILVVNLNHRGKMAIPDL) are cytoplasmic. The chain crosses the membrane as a helical span at residues 82 to 102 (YFVNLAVADLILVADSLIEVF). Topologically, residues 103-112 (NLNEKYYDYA) are extracellular. A helical transmembrane segment spans residues 113–133 (VLCTFMSLFLQVNMYSSIFFL). Cys-115 and Cys-192 are joined by a disulfide. Over 134-160 (TWMSFDRYIALANSMSSSPLRTMQHAK) the chain is Cytoplasmic. A helical transmembrane segment spans residues 161–181 (LSCGLIWMASILATLLPFTIV). Residues 182-202 (QTQHRGEVHFCFANVFEIQWL) are Extracellular-facing. A helical transmembrane segment spans residues 203–223 (EVTIGFLVPFSIIGLCYSLIG). Over 224–245 (RILMRSQKHRGLWPRRQKALRM) the chain is Cytoplasmic. The chain crosses the membrane as a helical span at residues 246–266 (IVVVVLVFFICWLPENVFISI). Residues 267–292 (QLLQGTADPSQRTATTLRHDYPLTGH) are Extracellular-facing. The helical transmembrane segment at 293 to 313 (IVNLAAFSNSCLNPIIYSFLG) threads the bilayer. Over 314–353 (ETFRDKLRLFIKQKASWSVVNRFCHHGLDLHLPVRSEVSE) the chain is Cytoplasmic.

This sequence belongs to the G-protein coupled receptor 1 family. In terms of assembly, homodimer. Heterodimer. Expressed in oocytes (at protein level). Highly expressed in brain, heart, testis and ovary. Weakly expressed in muscle and intestine.

The protein resides in the nucleus. It is found in the cytoplasm. The protein localises to the perinuclear region. It localises to the cytoskeleton. Its subcellular location is the cytoplasmic vesicle membrane. The protein resides in the cell membrane. It is found in the basolateral cell membrane. The protein localises to the endoplasmic reticulum membrane. It localises to the early endosome. Its subcellular location is the recycling endosome. The protein resides in the golgi apparatus. It is found in the trans-Golgi network. The protein localises to the golgi apparatus membrane. It localises to the cell projection. Its subcellular location is the dendrite. The protein resides in the dendritic spine membrane. It is found in the axon. The protein localises to the postsynaptic density. It localises to the mitochondrion membrane. Functionally, membrane G-protein coupled estrogen receptor that binds to 17-beta-estradiol (E2) with high affinity, leading to rapid and transient activation of numerous intracellular signaling pathways. Plays a role in the embryonic development of sensory and motor neurons. May induce apoptosis and reduce proliferation of brain cells. Involved in maintenance of meiotic arrest in oocytes. This Micropogonias undulatus (Atlantic croaker) protein is G-protein coupled estrogen receptor 1 (gper1).